Here is a 210-residue protein sequence, read N- to C-terminus: Outer-membrane lipoprotein LolB (210 aa).

The signal sequence occupies residues 1-19 (MNHLKSFFTALVAGFILTA). C20 carries the N-palmitoyl cysteine lipid modification. C20 carries the S-diacylglycerol cysteine lipid modification.

Belongs to the LolB family. Monomer.

The protein resides in the cell outer membrane. In terms of biological role, plays a critical role in the incorporation of lipoproteins in the outer membrane after they are released by the LolA protein. The chain is Outer-membrane lipoprotein LolB from Mannheimia succiniciproducens (strain KCTC 0769BP / MBEL55E).